The sequence spans 81 residues: Cytochrome b559 subunit alpha (81 aa).

The helical transmembrane segment at valine 21–tryptophan 35 threads the bilayer. Histidine 23 lines the heme pocket.

It belongs to the PsbE/PsbF family. As to quaternary structure, heterodimer of an alpha subunit and a beta subunit. PSII is composed of 1 copy each of membrane proteins PsbA, PsbB, PsbC, PsbD, PsbE, PsbF, PsbH, PsbI, PsbJ, PsbK, PsbL, PsbM, PsbT, PsbX, PsbY, PsbZ, Psb30/Ycf12, at least 3 peripheral proteins of the oxygen-evolving complex and a large number of cofactors. It forms dimeric complexes. Heme b is required as a cofactor.

Its subcellular location is the plastid. The protein localises to the chloroplast thylakoid membrane. In terms of biological role, this b-type cytochrome is tightly associated with the reaction center of photosystem II (PSII). PSII is a light-driven water:plastoquinone oxidoreductase that uses light energy to abstract electrons from H(2)O, generating O(2) and a proton gradient subsequently used for ATP formation. It consists of a core antenna complex that captures photons, and an electron transfer chain that converts photonic excitation into a charge separation. The protein is Cytochrome b559 subunit alpha of Mesostigma viride (Green alga).